The primary structure comprises 96 residues: RNA-binding protein Hfq (96 aa).

The 60-residue stretch at 9–68 (DPYLNALRRERIPVSIYLVNGIKLQGQIESFDQFVILLKNTVNQMVYKHAISTVVPARSV) folds into the Sm domain. The interval 65-96 (ARSVSHHNNPQQQQQHSQQTESAAPAAEPQAE) is disordered. Positions 70–96 (HHNNPQQQQQHSQQTESAAPAAEPQAE) are enriched in low complexity.

It belongs to the Hfq family. As to quaternary structure, homohexamer.

RNA chaperone that binds small regulatory RNA (sRNAs) and mRNAs to facilitate mRNA translational regulation in response to envelope stress, environmental stress and changes in metabolite concentrations. Also binds with high specificity to tRNAs. In Mannheimia succiniciproducens (strain KCTC 0769BP / MBEL55E), this protein is RNA-binding protein Hfq.